Consider the following 700-residue polypeptide: Eukaryotic peptide chain release factor GTP-binding subunit (700 aa).

Residues 10-136 (GQGQGYNQYN…YAAPAQSSSQ (127 aa)) form a several sort of repeats region. Low complexity predominate over residues 114 to 123 (QGAQGYNAQQ). The tract at residues 114-250 (QGAQGYNAQQ…TSTGGANSVD (137 aa)) is disordered. Positions 131–151 (AQSSSQGMTLKDFQNQQGSTN) are enriched in polar residues. Residues 137–267 (GMTLKDFQNQ…DEVDEEVVKD (131 aa)) form a charged region. 2 stretches are compositionally biased toward basic and acidic residues: residues 179–194 (KTEK…KTTD) and 204–221 (PKID…KTKE). The segment covering 222 to 246 (NTPSADDTSSEKTTSAKADTSTGGA) has biased composition (polar residues). Residues 272–498 (KDHVSIIFMG…YLDNMKTTDR (227 aa)) enclose the tr-type G domain. Residues 281–288 (GHVDAGKS) form a G1 region. 281 to 288 (GHVDAGKS) contacts GTP. Residues 337–341 (GKTIE) are G2. Threonine 355 carries the phosphothreonine modification. Positions 358-361 (DAPG) are G3. GTP contacts are provided by residues 358-362 (DAPGH) and 420-423 (NKMD). The interval 420 to 423 (NKMD) is G4. The G5 stretch occupies residues 462–464 (SGY).

It belongs to the TRAFAC class translation factor GTPase superfamily. Classic translation factor GTPase family. ERF3 subfamily.

It is found in the cytoplasm. Involved in translation termination. Stimulates the activity of ERF1. Binds guanine nucleotides. The polypeptide is Eukaryotic peptide chain release factor GTP-binding subunit (SUP35) (Kluyveromyces lactis (strain ATCC 8585 / CBS 2359 / DSM 70799 / NBRC 1267 / NRRL Y-1140 / WM37) (Yeast)).